Reading from the N-terminus, the 62-residue chain is Small acidic protein 1 (62 aa).

In terms of assembly, interacts with the COP9 signalosome. In terms of tissue distribution, expressed in roots, flowers, siliques, stems, leaves and seeds. In flowers, detected in petals, anthers and pistils.

Its function is as follows. Mediates responses to the synthetic auxin 2,4-dichlorophenoxyacetic acid (2,4-D). Not involved in the response to indole-3-acetic acid (IAA). Interacts with RUB modification-related components and may regulate the cullin-ring ubiquitin E3 ligase complex (CRL) activity. The protein is Small acidic protein 1 (SMAP1) of Arabidopsis thaliana (Mouse-ear cress).